Reading from the N-terminus, the 505-residue chain is Lysine--tRNA ligase (505 aa).

Residues glutamate 415 and glutamate 422 each coordinate Mg(2+).

Belongs to the class-II aminoacyl-tRNA synthetase family. Homodimer. Mg(2+) is required as a cofactor.

It is found in the cytoplasm. It catalyses the reaction tRNA(Lys) + L-lysine + ATP = L-lysyl-tRNA(Lys) + AMP + diphosphate. This is Lysine--tRNA ligase from Enterobacter sp. (strain 638).